The chain runs to 121 residues: uncharacterized protein (121 aa).

Disordered stretches follow at residues 1-28 (MGCA…QNGD) and 60-81 (QENL…EIPG). Phosphoserine is present on residues S95 and S115.

This is an uncharacterized protein from Mus musculus (Mouse).